Reading from the N-terminus, the 317-residue chain is Apolipoprotein E (317 aa).

A signal peptide spans 1–18 (MKVLWAALLVTFLAGCQA). Repeat copies occupy residues 80-101 (TLMDETMKELKAYKSELEEQLS), 102-123 (PVAEETRARLSKELQAAQARLG), 124-145 (ADMEDVRSRLVQYRSEVQAMLG), 146-167 (QSTEELRARLASHLRKLRKRLL), 168-189 (RDADDLQKRLAVYQAGAREGAE), 190-211 (RGVSAIRERLGPLVEQGRVRAA), 212-233 (TVGSLASQPLQERAQALGERLR), and 234-255 (ARMEEMGSRTRDRLDEVKEQVA). The interval 80–255 (TLMDETMKEL…RLDEVKEQVA (176 aa)) is 8 X 22 AA approximate tandem repeats. Methionine 143 carries the post-translational modification Methionine sulfoxide. Serine 147 is subject to Phosphoserine. The LDL and other lipoprotein receptors binding stretch occupies residues 158-168 (HLRKLRKRLLR). Residue 162-165 (LRKR) participates in heparin binding. The segment at 210–290 (AATVGSLASQ…SWFEPLVEDM (81 aa)) is lipid-binding and lipoprotein association. 229 to 236 (GERLRARM) lines the heparin pocket. The segment at 266–317 (QQISLQAEAFQARLKSWFEPLVEDMQRQWAGLVEKVQAAVGASTAPVPIDNH) is homooligomerization. Positions 278–290 (RLKSWFEPLVEDM) are specificity for association with VLDL.

It belongs to the apolipoprotein A1/A4/E family. Homotetramer. May interact with ABCA1; functionally associated with ABCA1 in the biogenesis of HDLs. May interact with APP/A4 amyloid-beta peptide; the interaction is extremely stable in vitro but its physiological significance is unclear. May interact with MAPT. May interact with MAP2. In the cerebrospinal fluid, interacts with secreted SORL1. Interacts with PMEL; this allows the loading of PMEL luminal fragment on ILVs to induce fibril nucleation. Post-translationally, APOE exists as multiple glycosylated and sialylated glycoforms within cells and in plasma. The extent of glycosylation and sialylation are tissue and context specific. In terms of processing, glycated in plasma VLDL. Phosphorylated by FAM20C in the extracellular medium.

Its subcellular location is the secreted. The protein localises to the extracellular space. The protein resides in the extracellular matrix. It is found in the extracellular vesicle. It localises to the endosome. Its subcellular location is the multivesicular body. In terms of biological role, APOE is an apolipoprotein, a protein associating with lipid particles, that mainly functions in lipoprotein-mediated lipid transport between organs via the plasma and interstitial fluids. APOE is a core component of plasma lipoproteins and is involved in their production, conversion and clearance. Apolipoproteins are amphipathic molecules that interact both with lipids of the lipoprotein particle core and the aqueous environment of the plasma. As such, APOE associates with chylomicrons, chylomicron remnants, very low density lipoproteins (VLDL) and intermediate density lipoproteins (IDL) but shows a preferential binding to high-density lipoproteins (HDL). It also binds a wide range of cellular receptors including the LDL receptor/LDLR, the LDL receptor-related proteins LRP1, LRP2 and LRP8 and the very low-density lipoprotein receptor/VLDLR that mediate the cellular uptake of the APOE-containing lipoprotein particles. Finally, APOE also has a heparin-binding activity and binds heparan-sulfate proteoglycans on the surface of cells, a property that supports the capture and the receptor-mediated uptake of APOE-containing lipoproteins by cells. A main function of APOE is to mediate lipoprotein clearance through the uptake of chylomicrons, VLDLs, and HDLs by hepatocytes. APOE is also involved in the biosynthesis by the liver of VLDLs as well as their uptake by peripheral tissues ensuring the delivery of triglycerides and energy storage in muscle, heart and adipose tissues. By participating in the lipoprotein-mediated distribution of lipids among tissues, APOE plays a critical role in plasma and tissues lipid homeostasis. APOE is also involved in two steps of reverse cholesterol transport, the HDLs-mediated transport of cholesterol from peripheral tissues to the liver, and thereby plays an important role in cholesterol homeostasis. First, it is functionally associated with ABCA1 in the biogenesis of HDLs in tissues. Second, it is enriched in circulating HDLs and mediates their uptake by hepatocytes. APOE also plays an important role in lipid transport in the central nervous system, regulating neuron survival and sprouting. The protein is Apolipoprotein E (APOE) of Macaca fascicularis (Crab-eating macaque).